Reading from the N-terminus, the 374-residue chain is Aminomethyltransferase (374 aa).

Belongs to the GcvT family. As to quaternary structure, the glycine cleavage system is composed of four proteins: P, T, L and H.

The enzyme catalyses N(6)-[(R)-S(8)-aminomethyldihydrolipoyl]-L-lysyl-[protein] + (6S)-5,6,7,8-tetrahydrofolate = N(6)-[(R)-dihydrolipoyl]-L-lysyl-[protein] + (6R)-5,10-methylene-5,6,7,8-tetrahydrofolate + NH4(+). In terms of biological role, the glycine cleavage system catalyzes the degradation of glycine. The polypeptide is Aminomethyltransferase (Edwardsiella ictaluri (strain 93-146)).